Reading from the N-terminus, the 164-residue chain is UPF0304 protein YfbU (164 aa).

It belongs to the UPF0304 family.

In Salmonella enteritidis PT4 (strain P125109), this protein is UPF0304 protein YfbU.